The sequence spans 377 residues: Transcription factor ast-1 (377 aa).

The segment at 72-143 is disordered; it reads PNRMLYNDNT…SNGSSSSTES (72 aa). Composition is skewed to low complexity over residues 96-109 and 118-142; these read STSA…TSSK and TESS…SSTE. Positions 214–294 form a DNA-binding region, ETS; that stretch reads TQLWQFLLEL…HGKRYAYKFD (81 aa).

It belongs to the ETS family. As to expression, expressed in the A-neurons in the male-specific genital sensilla (simple sense organs) known as rays.

Its subcellular location is the nucleus. It is found in the cell projection. The protein localises to the neuron projection. Functionally, transcription factor. Probably binds to DNA sequences containing the consensus motif 5'-CGGA[AT][AG]-3'. Positively modulates expression of dopamine pathway genes, acting as a terminal selector for differentiation of dopaminergic neurons; may act in concert with homeobox proteins ceh-40, ceh-43 and ceh-20. Required for axon navigation in some interneurons, perhaps acting in the same pathways as basement membrane protein nid-1 and unc-6/netrin. Plays a role in the differentiation of the ventral cord pioneer neuron AVG. Required for morphogenesis of the pharynx. In Caenorhabditis elegans, this protein is Transcription factor ast-1.